A 439-amino-acid polypeptide reads, in one-letter code: D-erythronate kinase (439 aa).

Residues Ser-253, Gly-366–Val-369, and Gly-412 contribute to the ATP site.

The protein belongs to the four-carbon acid sugar kinase family.

It catalyses the reaction D-erythronate + ATP = 4-phospho-D-erythronate + ADP + H(+). Its function is as follows. Catalyzes the ATP-dependent phosphorylation of D-erythronate to D-erythronate 4-phosphate. Can also phosphorylate D-threonate and 4-hydroxy-L-threonine, with lower efficiency. This chain is D-erythronate kinase, found in Heliobacterium modesticaldum (strain ATCC 51547 / Ice1).